Consider the following 162-residue polypeptide: uncharacterized protein (162 aa).

This is an uncharacterized protein from Frog virus 3 (isolate Goorha) (FV-3).